Consider the following 309-residue polypeptide: Mitochondrial phosphate carrier protein 1, mitochondrial (309 aa).

Residues 1 to 15 are Mitochondrial intermembrane-facing; it reads MTRVKSKLDEELSSP. A helical membrane pass occupies residues 16 to 36; that stretch reads WFYTVCTMGGMLSAGTTHLAI. Solcar repeat units follow at residues 16–100, 109–193, and 210–289; these read WFYT…FKTL, NRTS…SVEF, and QQLG…IKVL. Topologically, residues 37–74 are mitochondrial matrix; sequence TPLDVLKVNMQVNPVKYNSIPSGFSTLLREHGHSYLWR. A helical transmembrane segment spans residues 75–94; it reads GWSGKLLGYGVQGGCRFGLY. Topologically, residues 95 to 111 are mitochondrial intermembrane; sequence EYFKTLYSDVLPNHNRT. Residues 112–132 traverse the membrane as a helical segment; sequence SIYFLSSASAQIFADMALCPF. Over 133-167 the chain is Mitochondrial matrix; that stretch reads EAIKVRVQTQPMFAKGLLDGFPRVYRSEGLAGFHR. Residues 168-187 form a helical membrane-spanning segment; that stretch reads GLFPLWCRNLPFSMVMFSTF. Over 188–208 the chain is Mitochondrial intermembrane; the sequence is EQSVEFIYQKIIQKRKQDCSK. The helical transmembrane segment at 209 to 229 threads the bilayer; sequence AQQLGVTCLAGYTAGAVGTII. The Mitochondrial matrix segment spans residues 230–268; that stretch reads SNPADVVLSSLYNNKAKNVLQAVRNIGFVGLFTRSLPVR. Residues 269 to 289 form a helical membrane-spanning segment; sequence ITIVGPVITLQWFFYDAIKVL. The Mitochondrial intermembrane segment spans residues 290 to 309; sequence SGFPTSGGVKKPVDAAKLSV.

Belongs to the mitochondrial carrier (TC 2.A.29) family. As to expression, expressed in stems, leaves and flowers. Strong expression in the stamens of flowers.

The protein localises to the mitochondrion inner membrane. Functionally, transport of phosphate groups from the cytosol to the mitochondrial matrix. Mediates salt stress tolerance through an ATP-dependent pathway and via modulation of the gibberellin metabolism. The sequence is that of Mitochondrial phosphate carrier protein 1, mitochondrial (MPT1) from Arabidopsis thaliana (Mouse-ear cress).